A 259-amino-acid chain; its full sequence is Cysteine protease IpaJ (259 aa).

Catalysis depends on residues C64, H206, and D218.

The protein resides in the secreted. It localises to the host cytoplasm. Functionally, virulence factor that eliminates N-myristoyl protein modifications in infected host cells. Acts as a cysteine protease that cleaves the peptide bond between N-myristoylated Gly-2 and Asn-3 of human ARF1, leading to the elimination of the myristoyl group and alteration of protein trafficking in host cell. Could also cleave an array of N-myristoylated host proteins involved in cellular growth, signal transduction, autophagasome maturation and organelle function. The protein is Cysteine protease IpaJ (ipaJ) of Shigella flexneri.